A 338-amino-acid polypeptide reads, in one-letter code: Purple acid phosphatase 17 (338 aa).

The signal sequence occupies residues 1–31; it reads MNSGRRSLMSATASLSLLLCIFTTFVVVSNG. Residue Asp53 participates in Fe cation binding. A glycan (N-linked (GlcNAc...) asparagine) is linked at Asn61. Fe cation-binding residues include Asp86 and Tyr89. Position 86 (Asp86) interacts with Zn(2+). Positions 124 and 218 each coordinate Zn(2+). The active-site Proton donor is the His227. His253 contacts Zn(2+). 253–255 provides a ligand contact to substrate; it reads HDH. His255 is a Fe cation binding site.

This sequence belongs to the metallophosphoesterase superfamily. Purple acid phosphatase family. Homodimer. Requires Fe cation as cofactor. It depends on Zn(2+) as a cofactor. In terms of tissue distribution, expressed in roots, stems, leaves, flowers and siliques.

Its subcellular location is the secreted. It carries out the reaction a phosphate monoester + H2O = an alcohol + phosphate. It catalyses the reaction 2 a phenolic donor + H2O2 = 2 a phenolic radical donor + 2 H2O. With respect to regulation, inhibited by phosphate and molybdate. Metallo-phosphoesterase involved in phosphate metabolism. Has a peroxidase activity. The sequence is that of Purple acid phosphatase 17 (PAP17) from Arabidopsis thaliana (Mouse-ear cress).